Consider the following 205-residue polypeptide: Probable GTP-binding protein EngB (205 aa).

The EngB-type G domain maps to 27 to 201 (TGIEIAFAGR…AAKLDFWFSP (175 aa)). Residues 35–42 (GRSNAGKS), 62–66 (GRTQL), 80–83 (DLPG), 147–150 (TKAD), and 180–182 (FSA) each bind GTP. Mg(2+)-binding residues include serine 42 and threonine 64.

Belongs to the TRAFAC class TrmE-Era-EngA-EngB-Septin-like GTPase superfamily. EngB GTPase family. Requires Mg(2+) as cofactor.

Necessary for normal cell division and for the maintenance of normal septation. The sequence is that of Probable GTP-binding protein EngB from Haemophilus influenzae (strain 86-028NP).